Here is a 623-residue protein sequence, read N- to C-terminus: Chaperone protein HtpG (623 aa).

The tract at residues 1 to 336 is a; substrate-binding; it reads MVSKQQTMGF…ASDLPLNISR (336 aa). Residues 337–550 are b; that stretch reads EILQDNKQVE…EQDMGLEMQR (214 aa). The interval 551–623 is c; sequence ILQAAGQQVP…NRVNRLLVSS (73 aa).

This sequence belongs to the heat shock protein 90 family. As to quaternary structure, homodimer.

It localises to the cytoplasm. In terms of biological role, molecular chaperone. Has ATPase activity. This Legionella pneumophila (strain Paris) protein is Chaperone protein HtpG.